Consider the following 214-residue polypeptide: Outer-membrane lipoprotein carrier protein (214 aa).

The signal sequence occupies residues Met1–Ala23.

The protein belongs to the LolA family. As to quaternary structure, monomer.

The protein localises to the periplasm. Participates in the translocation of lipoproteins from the inner membrane to the outer membrane. Only forms a complex with a lipoprotein if the residue after the N-terminal Cys is not an aspartate (The Asp acts as a targeting signal to indicate that the lipoprotein should stay in the inner membrane). The chain is Outer-membrane lipoprotein carrier protein from Shewanella frigidimarina (strain NCIMB 400).